Consider the following 333-residue polypeptide: Probable cytosolic iron-sulfur protein assembly protein 1 (333 aa).

WD repeat units lie at residues 12 to 50 (LHDD…IIEE), 55 to 94 (AHKK…YNDE), 107 to 146 (GHEN…EEFE), 153 to 192 (EHSQ…WECC), 197 to 238 (GHEG…GEYE), 250 to 288 (AHTR…WIVE), and 298 to 333 (YETN…FDEN).

This sequence belongs to the WD repeat CIA1 family. In terms of assembly, interacts with NAR1.

The protein resides in the cytoplasm. The protein localises to the nucleus. Its function is as follows. Essential component of the cytosolic iron-sulfur (Fe/S) protein assembly machinery. Required for the maturation of extramitochondrial Fe/S proteins. The chain is Probable cytosolic iron-sulfur protein assembly protein 1 from Kluyveromyces lactis (strain ATCC 8585 / CBS 2359 / DSM 70799 / NBRC 1267 / NRRL Y-1140 / WM37) (Yeast).